The primary structure comprises 185 residues: Threonylcarbamoyl-AMP synthase (185 aa).

The YrdC-like domain occupies 4–185; that stretch reads SWRVQQAAQD…IATGQVMRAG (182 aa).

Belongs to the SUA5 family. TsaC subfamily.

It localises to the cytoplasm. The catalysed reaction is L-threonine + hydrogencarbonate + ATP = L-threonylcarbamoyladenylate + diphosphate + H2O. Required for the formation of a threonylcarbamoyl group on adenosine at position 37 (t(6)A37) in tRNAs that read codons beginning with adenine. Catalyzes the conversion of L-threonine, HCO(3)(-)/CO(2) and ATP to give threonylcarbamoyl-AMP (TC-AMP) as the acyladenylate intermediate, with the release of diphosphate. This chain is Threonylcarbamoyl-AMP synthase, found in Pseudomonas savastanoi pv. phaseolicola (strain 1448A / Race 6) (Pseudomonas syringae pv. phaseolicola (strain 1448A / Race 6)).